Reading from the N-terminus, the 160-residue chain is Endoplasmic reticulum transmembrane protein 2 (160 aa).

Topologically, residues 1–2 (MG) are lumenal. A helical transmembrane segment spans residues 3 to 23 (VYLAVLFSLLVIEMAILFILV). Over 24–45 (LPLPQRMRRWLYIRYSIISTNK) the chain is Cytoplasmic. The chain crosses the membrane as a helical span at residues 46 to 66 (KFRTYMVGIMIFVGLLFIDSW). Topologically, residues 67 to 103 (KRSQIRVSTYRNQKNPYIINSVTPVDALASRAYNQRN) are lumenal. A helical transmembrane segment spans residues 104-124 (VYISGFIIYFYICILTVMSIL). The Cytoplasmic portion of the chain corresponds to 125 to 160 (RRIVEWNDKMKAGDDILKEKLRRKQKYLEELQKKKF). The Di-lysine motif signature appears at 157-160 (KKKF).

The protein belongs to the BCAP29/BCAP31 family.

The protein resides in the endoplasmic reticulum membrane. Its function is as follows. May play a role in anterograde transport of membrane proteins from the endoplasmic reticulum to the Golgi. This Saccharomyces cerevisiae (strain ATCC 204508 / S288c) (Baker's yeast) protein is Endoplasmic reticulum transmembrane protein 2 (YET2).